A 453-amino-acid chain; its full sequence is Trigger factor (453 aa).

In terms of domain architecture, PPIase FKBP-type spans 171 to 256; the sequence is GDRVTVSFKG…ATKVEAPQDV (86 aa).

Belongs to the FKBP-type PPIase family. Tig subfamily.

The protein localises to the cytoplasm. It catalyses the reaction [protein]-peptidylproline (omega=180) = [protein]-peptidylproline (omega=0). Its function is as follows. Involved in protein export. Acts as a chaperone by maintaining the newly synthesized protein in an open conformation. Functions as a peptidyl-prolyl cis-trans isomerase. In Rhodopseudomonas palustris (strain BisB5), this protein is Trigger factor.